Here is a 205-residue protein sequence, read N- to C-terminus: Protein N-terminal glutamine amidohydrolase (205 aa).

Residues cysteine 28, histidine 81, and aspartate 97 contribute to the active site.

The protein belongs to the NTAQ1 family. Monomer.

The protein resides in the cytoplasm. The protein localises to the cytosol. It localises to the nucleus. The catalysed reaction is N-terminal L-glutaminyl-[protein] + H2O = N-terminal L-glutamyl-[protein] + NH4(+). Mediates the side-chain deamidation of N-terminal glutamine residues to glutamate, an important step in N-end rule pathway of protein degradation. Conversion of the resulting N-terminal glutamine to glutamate renders the protein susceptible to arginylation, polyubiquitination and degradation as specified by the N-end rule. Does not act on substrates with internal or C-terminal glutamine and does not act on non-glutamine residues in any position. Does not deaminate acetylated N-terminal glutamine. With the exception of proline, all tested second-position residues on substrate peptides do not greatly influence the activity. In contrast, a proline at position 2, virtually abolishes deamidation of N-terminal glutamine. The sequence is that of Protein N-terminal glutamine amidohydrolase from Homo sapiens (Human).